We begin with the raw amino-acid sequence, 587 residues long: UDP-N-acetylmuramoylalanine--D-glutamate ligase (587 aa).

The tract at residues 124–147 is disordered; the sequence is DHLVPPESPLSDASDISDASDATD. The segment covering 132-147 has biased composition (low complexity); it reads PLSDASDISDASDATD. 214–220 lines the ATP pocket; it reads GTNGKTT.

It belongs to the MurCDEF family.

It localises to the cytoplasm. It carries out the reaction UDP-N-acetyl-alpha-D-muramoyl-L-alanine + D-glutamate + ATP = UDP-N-acetyl-alpha-D-muramoyl-L-alanyl-D-glutamate + ADP + phosphate + H(+). It participates in cell wall biogenesis; peptidoglycan biosynthesis. Functionally, cell wall formation. Catalyzes the addition of glutamate to the nucleotide precursor UDP-N-acetylmuramoyl-L-alanine (UMA). In Polaromonas sp. (strain JS666 / ATCC BAA-500), this protein is UDP-N-acetylmuramoylalanine--D-glutamate ligase.